A 350-amino-acid polypeptide reads, in one-letter code: Protein-glutamate methylesterase/protein-glutamine glutaminase (350 aa).

Residues 5-122 (KVLCVDDSAL…RDGLIEYSEV (118 aa)) form the Response regulatory domain. A 4-aspartylphosphate modification is found at aspartate 56. Positions 152-346 (PFASSEKLVI…ERILTRLGDR (195 aa)) constitute a CheB-type methylesterase domain. Active-site residues include serine 165, histidine 191, and aspartate 288.

It belongs to the CheB family. In terms of processing, phosphorylated by CheA. Phosphorylation of the N-terminal regulatory domain activates the methylesterase activity.

The protein localises to the cytoplasm. It carries out the reaction [protein]-L-glutamate 5-O-methyl ester + H2O = L-glutamyl-[protein] + methanol + H(+). The catalysed reaction is L-glutaminyl-[protein] + H2O = L-glutamyl-[protein] + NH4(+). Involved in chemotaxis. Part of a chemotaxis signal transduction system that modulates chemotaxis in response to various stimuli. Catalyzes the demethylation of specific methylglutamate residues introduced into the chemoreceptors (methyl-accepting chemotaxis proteins or MCP) by CheR. Also mediates the irreversible deamidation of specific glutamine residues to glutamic acid. The chain is Protein-glutamate methylesterase/protein-glutamine glutaminase from Bordetella parapertussis (strain 12822 / ATCC BAA-587 / NCTC 13253).